Here is a 271-residue protein sequence, read N- to C-terminus: Tumor necrosis factor receptor superfamily member 4 (271 aa).

A signal peptide spans 1–19 (MYVWVQQPTAFLLLGLSLG). At 20–210 (VTVKLNCVKD…TPTLVAPEGP (191 aa)) the chain is on the extracellular side. TNFR-Cys repeat units follow at residues 25–60 (NCVKDTYPSGHKCCRECQPGHGMVSRCDHTRDTVCH) and 61–102 (PCEP…DTVC). 8 disulfide bridges follow: C26-C37, C38-C51, C41-C59, C62-C76, C79-C94, C82-C102, C104-C122, and C125-C138. One copy of the TNFR-Cys 3; truncated repeat lies at 103–123 (QCRPGTQPRQDSSHKLGVDCV). One copy of the TNFR-Cys 4 repeat lies at 124-164 (PCPPGHFSPGSNQACKPWTNCTLSGKQIRHPASNSLDTVCE). N-linked (GlcNAc...) asparagine glycosylation is present at N143. Cysteines 144 and 163 form a disulfide. The chain crosses the membrane as a helical span at residues 211 to 235 (AFAVILGLGLGLLAPLTVLLALYLL). Topologically, residues 236–271 (RKAWRSPNTPKPCWGNSFRTPIQEEQTDTHFTLAKI) are cytoplasmic.

Interacts with TRAF2, TRAF3 and TRAF5. In terms of tissue distribution, activated T-cells.

The protein localises to the membrane. Receptor for TNFSF4/OX40L/GP34. Is a costimulatory molecule implicated in long-term T-cell immunity. The protein is Tumor necrosis factor receptor superfamily member 4 (Tnfrsf4) of Rattus norvegicus (Rat).